The chain runs to 544 residues: Membrane protein insertase YidC (544 aa).

A helical membrane pass occupies residues 6–26 (NILLIGLLFVSFLLWQQWQAD). Positions 34-58 (AAQTQSSIPASTVADSHSSDVPDAD) are disordered. Polar residues predominate over residues 39 to 49 (SSIPASTVADS). A run of 4 helical transmembrane segments spans residues 345-365 (LLMF…LITL), 423-443 (GGCL…WVLL), 460-480 (LSVQ…MFVM), and 503-523 (VIFT…WLVG).

This sequence belongs to the OXA1/ALB3/YidC family. Type 1 subfamily. In terms of assembly, interacts with the Sec translocase complex via SecD. Specifically interacts with transmembrane segments of nascent integral membrane proteins during membrane integration.

Its subcellular location is the cell inner membrane. In terms of biological role, required for the insertion and/or proper folding and/or complex formation of integral membrane proteins into the membrane. Involved in integration of membrane proteins that insert both dependently and independently of the Sec translocase complex, as well as at least some lipoproteins. Aids folding of multispanning membrane proteins. The protein is Membrane protein insertase YidC of Shewanella halifaxensis (strain HAW-EB4).